We begin with the raw amino-acid sequence, 582 residues long: DBIRD complex subunit ZNF326 (582 aa).

The segment at 1–124 (MDFEDDYTHS…YRNSLDSFGG (124 aa)) is mediates transcriptional activation. Residues Ser-48, Ser-56, Ser-63, Ser-69, Ser-81, Ser-82, Ser-91, Ser-106, Ser-114, Ser-118, Ser-121, and Ser-137 each carry the phosphoserine modification. A Glycyl lysine isopeptide (Lys-Gly) (interchain with G-Cter in SUMO2) cross-link involves residue Lys-140. The segment at 154–194 (YSSYSSFSSPHMKPAPVGSRGRGTPAYPESTFGSRNYDAFG) is disordered. Arg-173 is modified (omega-N-methylarginine). Ser-212 carries the phosphoserine modification. Residue Arg-235 is modified to Omega-N-methylarginine. Positions 238–260 (KRKMMQPFNKPSGTFIKKPKLAK) match the Bipartite nuclear localization signal motif. Lys-240 is covalently cross-linked (Glycyl lysine isopeptide (Lys-Gly) (interchain with G-Cter in SUMO2)). Residues 243–302 (QPFNKPSGTFIKKPKLAKPMEKISLSKSPTKTDPKNEEEEKRRIEARREKQRRRREKNSE) are disordered. Position 247 is an N6-acetyllysine; alternate (Lys-247). A Glycyl lysine isopeptide (Lys-Gly) (interchain with G-Cter in SUMO2); alternate cross-link involves residue Lys-247. Residue Ser-249 is modified to Phosphoserine. Thr-251 bears the Phosphothreonine mark. Glycyl lysine isopeptide (Lys-Gly) (interchain with G-Cter in SUMO2) cross-links involve residues Lys-254 and Lys-264. Phosphoserine is present on Ser-270. A compositionally biased stretch (basic and acidic residues) spans 272–290 (TKTDPKNEEEEKRRIEARR). A C2H2 AKAP95-type 1 zinc finger spans residues 314–336 (CSFCKFRTFEEKDIELHLESSSH). Lys-401 is covalently cross-linked (Glycyl lysine isopeptide (Lys-Gly) (interchain with G-Cter in SUMO2)). A C2H2 AKAP95-type 2 zinc finger spans residues 407 to 430 (CSACSVYIPALHSSVQQHLKSPDH). Residues Lys-459 and Lys-467 each participate in a glycyl lysine isopeptide (Lys-Gly) (interchain with G-Cter in SUMO2) cross-link. The disordered stretch occupies residues 472–582 (FEIQDHSQDQ…DFPVEQPEEN (111 aa)). Over residues 483-523 (IEGDEEDEEKIDEPIEEEEDEDEEEEAEEVGEVEEVEEVEE) the composition is skewed to acidic residues. Residues 530–545 (EGEGNIQGVGEGGEVG) show a composition bias toward gly residues. Over residues 552–567 (GVGEVEEVEELEEETA) the composition is skewed to acidic residues.

The protein belongs to the AKAP95 family. As to quaternary structure, component of the DBIRD complex. Interacts with CCAR2; the interaction is direct.

Its subcellular location is the nucleus matrix. Functionally, core component of the DBIRD complex, a multiprotein complex that acts at the interface between core mRNP particles and RNA polymerase II (RNAPII) and integrates transcript elongation with the regulation of alternative splicing: the DBIRD complex affects local transcript elongation rates and alternative splicing of a large set of exons embedded in (A + T)-rich DNA regions. May play a role in neuronal differentiation and is able to bind DNA and activate expression in vitro. The polypeptide is DBIRD complex subunit ZNF326 (ZNF326) (Homo sapiens (Human)).